Reading from the N-terminus, the 210-residue chain is Ribosomal RNA large subunit methyltransferase E (210 aa).

S-adenosyl-L-methionine contacts are provided by Gly61, Trp63, Asp81, Asp97, and Asp122. Catalysis depends on Lys162, which acts as the Proton acceptor.

The protein belongs to the class I-like SAM-binding methyltransferase superfamily. RNA methyltransferase RlmE family.

The protein localises to the cytoplasm. The enzyme catalyses uridine(2552) in 23S rRNA + S-adenosyl-L-methionine = 2'-O-methyluridine(2552) in 23S rRNA + S-adenosyl-L-homocysteine + H(+). In terms of biological role, specifically methylates the uridine in position 2552 of 23S rRNA at the 2'-O position of the ribose in the fully assembled 50S ribosomal subunit. The polypeptide is Ribosomal RNA large subunit methyltransferase E (Xanthomonas campestris pv. campestris (strain 8004)).